The following is a 169-amino-acid chain: Lutropin/choriogonadotropin subunit beta (169 aa).

The first 20 residues, 1 to 20 (MEMLQGLLLWMLLSVGGVWA), serve as a signal peptide directing secretion. 6 disulfide bridges follow: C29–C77, C43–C92, C46–C130, C54–C108, C58–C110, and C113–C120. Residue N33 is glycosylated (N-linked (GlcNAc...) asparagine). The segment at 131-169 (APQTSSSCKDPPSQPLTSTSTPTPGASRRSSHPLPINTS) is disordered. The segment covering 145 to 158 (PLTSTSTPTPGASR) has biased composition (low complexity).

The protein belongs to the glycoprotein hormones subunit beta family. Heterodimer of a common alpha chain and a unique beta chain which confers biological specificity to thyrotropin, lutropin, follitropin and gonadotropin.

The protein resides in the secreted. Functionally, promotes spermatogenesis and ovulation by stimulating the testes and ovaries to synthesize steroids. This is Lutropin/choriogonadotropin subunit beta (LHB) from Equus asinus (Donkey).